The chain runs to 534 residues: Autophagic-related protein 16.2 (534 aa).

7 WD repeats span residues 243–281 (THDGEVHDVEWMSDDTFATAGSDSKVQIWRVSPNKTDAS), 288–329 (GCLG…STFS), 330–368 (GHTDKVSSARLFQSHNVISGSADRTIKNWDISSIRCLKS), 371–411 (VGST…ATYS), 413–452 (ELGQKVSSLDISMDGLQVLASSRDDTLSLIDVRNYGIIHL), 459–498 (KTSCDSTRAIFSSTGEYVLAGSSNSSVFIWNTKTTKLEKV), and 504–534 (SDSAQIMSLAWNPSGRGLLACDRQKTCTLWR).

It belongs to the WD repeat tipD family. As to quaternary structure, homodimer (via N-terminus). Most likely a component of a complex at least containing atg-5, lgg-3, atg-16.1 and/or atg-16.2. Interacts (via N-terminus) with atg-16.1 (via N-terminus). Interacts (via N-terminus) with atg-5. Interacts (via WD 5-6 repeats) with lgg-2; the interaction is direct. In terms of tissue distribution, expressed in neurons, pharyngeal muscles, body wall muscle cells and intestinal cells.

Its subcellular location is the cytoplasm. It is found in the cell membrane. In terms of biological role, most likely a component of the atg-5-atg-12-atg-16.1/atg-16.2 complex, which is recruited to the preautophagosomal membrane and associates with lgg-2 to promote autophagosome formation. Plays a role in the recruitment of lipidated lgg-1 probably to the autophagosome membrane to promote autophagosome formation. Furthermore, association with atg-5 is required for the nucleation of lgg-1 positive autophagosomes. Although its role in autophagosome formation may be distinct to the role of atg-16.2, it functions in a partially redundant manner with atg-16.1 to regulate autophagic processes. In a daf-18/PTEN- and daf-16/FOXO-dependent manner, required for maintaining the numbers of germ stem cell progenitors in the gonad during the late phases of larval development. The protein is Autophagic-related protein 16.2 of Caenorhabditis elegans.